Here is a 371-residue protein sequence, read N- to C-terminus: Putative glutamate--cysteine ligase 2 (371 aa).

Belongs to the glutamate--cysteine ligase type 2 family. YbdK subfamily.

The enzyme catalyses L-cysteine + L-glutamate + ATP = gamma-L-glutamyl-L-cysteine + ADP + phosphate + H(+). Its function is as follows. ATP-dependent carboxylate-amine ligase which exhibits weak glutamate--cysteine ligase activity. This is Putative glutamate--cysteine ligase 2 from Burkholderia lata (strain ATCC 17760 / DSM 23089 / LMG 22485 / NCIMB 9086 / R18194 / 383).